We begin with the raw amino-acid sequence, 585 residues long: Protein cereblon (585 aa).

Disordered regions lie at residues 1 to 109 (MDEE…DLES) and 156 to 195 (FSQE…IGFD). The span at 80 to 95 (QDDTASEGSHPSSDMS) shows a compositional bias: polar residues. A compositionally biased stretch (basic and acidic residues) spans 158 to 167 (QERRRSRTSE). Pro residues predominate over residues 178–189 (VDPPPQQPPRPP). Positions 225–451 (HMLIFLHQHI…LIKSTFKDET (227 aa)) constitute a Lon N-terminal domain. The 110-residue stretch at 450 to 559 (ETLFFCRYCN…LAGSSVRIGK (110 aa)) folds into the CULT domain. Zn(2+)-binding residues include C455, C458, C524, and C527.

This sequence belongs to the CRBN family. In terms of assembly, likely a component of a DCX (DDB1-CUL4-X-box) protein ligase complex. May interact with pic/DDB1. Post-translationally, ubiquitinated. As to expression, expressed in the fat body (at protein level).

The protein localises to the nucleus. Its pathway is protein modification; protein ubiquitination. Its function is as follows. Substrate recognition component of a DCX (DDB1-CUL4-X-box) E3 protein ligase complex that mediates the ubiquitination and subsequent proteasomal degradation of target proteins. Has an essential role in mediating growth by negatively regulating insulin signaling. It also has a role in maintaining presynaptic function in the neuromuscular junction synapses of third-instar larvae. The protein is Protein cereblon of Drosophila melanogaster (Fruit fly).